The chain runs to 226 residues: MGIRAIVVDTAGTTTDLTFIQDVLFPYSVKALPDFLAQNQHNVLVENCICDTRDIALEPDADLARVTEILQQWVHEDRKATPLKTLQGLIWKQGYAHGEFTGHIFPDFIEAVNRFSAQKLRIYSFSSGSVEAQKLLFSHSDGGDLTEMFSGHFDTRTGNKLDKQAYANILNTISLSPKQVLFVSDVVEELKAAEAAGMMTCQMVRDSKQRTGDFRTINSFDELVID.

The protein belongs to the HAD-like hydrolase superfamily. MasA/MtnC family. In terms of assembly, monomer. Mg(2+) is required as a cofactor.

It catalyses the reaction 5-methylsulfanyl-2,3-dioxopentyl phosphate + H2O = 1,2-dihydroxy-5-(methylsulfanyl)pent-1-en-3-one + phosphate. It functions in the pathway amino-acid biosynthesis; L-methionine biosynthesis via salvage pathway; L-methionine from S-methyl-5-thio-alpha-D-ribose 1-phosphate: step 3/6. It participates in amino-acid biosynthesis; L-methionine biosynthesis via salvage pathway; L-methionine from S-methyl-5-thio-alpha-D-ribose 1-phosphate: step 4/6. Functionally, bifunctional enzyme that catalyzes the enolization of 2,3-diketo-5-methylthiopentyl-1-phosphate (DK-MTP-1-P) into the intermediate 2-hydroxy-3-keto-5-methylthiopentenyl-1-phosphate (HK-MTPenyl-1-P), which is then dephosphorylated to form the acireductone 1,2-dihydroxy-3-keto-5-methylthiopentene (DHK-MTPene). The protein is Enolase-phosphatase E1 of Shewanella sp. (strain MR-4).